Consider the following 341-residue polypeptide: Glycerol-3-phosphate dehydrogenase [NAD(P)+] (341 aa).

Residues S14, F15, R35, and K108 each contribute to the NADPH site. K108 and G136 together coordinate sn-glycerol 3-phosphate. Position 140 (A140) interacts with NADPH. Sn-glycerol 3-phosphate is bound by residues K191, D244, S254, R255, and N256. The Proton acceptor role is filled by K191. R255 is an NADPH binding site. Residues V279 and E281 each contribute to the NADPH site.

Belongs to the NAD-dependent glycerol-3-phosphate dehydrogenase family.

The protein resides in the cytoplasm. It catalyses the reaction sn-glycerol 3-phosphate + NAD(+) = dihydroxyacetone phosphate + NADH + H(+). The enzyme catalyses sn-glycerol 3-phosphate + NADP(+) = dihydroxyacetone phosphate + NADPH + H(+). It functions in the pathway membrane lipid metabolism; glycerophospholipid metabolism. Catalyzes the reduction of the glycolytic intermediate dihydroxyacetone phosphate (DHAP) to sn-glycerol 3-phosphate (G3P), the key precursor for phospholipid synthesis. In Pseudomonas putida (strain ATCC 700007 / DSM 6899 / JCM 31910 / BCRC 17059 / LMG 24140 / F1), this protein is Glycerol-3-phosphate dehydrogenase [NAD(P)+].